The following is a 365-amino-acid chain: Probable receptor-like protein kinase At2g47060 (365 aa).

The tract at residues 18 to 48 (DYGGRHNQAKHFPPGNDARHHQASETAQKGP) is disordered. Positions 73 to 353 (FGSNSLIGEG…IVVKALQPLL (281 aa)) constitute a Protein kinase domain. ATP contacts are provided by residues 79-87 (IGEGSYGRV) and Lys-101. Tyr-145 is subject to Phosphotyrosine. Asp-203 acts as the Proton acceptor in catalysis. Residues Ser-207 and Ser-237 each carry the phosphoserine modification. Thr-238 and Thr-243 each carry phosphothreonine. Phosphotyrosine is present on Tyr-251.

This sequence belongs to the protein kinase superfamily. Ser/Thr protein kinase family.

It carries out the reaction L-seryl-[protein] + ATP = O-phospho-L-seryl-[protein] + ADP + H(+). The catalysed reaction is L-threonyl-[protein] + ATP = O-phospho-L-threonyl-[protein] + ADP + H(+). The chain is Probable receptor-like protein kinase At2g47060 from Arabidopsis thaliana (Mouse-ear cress).